The sequence spans 1321 residues: Indole-3-acetaldehyde oxidase (1321 aa).

Residues 1 to 90 (MSLVFAINGQ…HCNITTSEGL (90 aa)) enclose the 2Fe-2S ferredoxin-type domain. [2Fe-2S] cluster contacts are provided by Cys-42, Cys-47, and Cys-50. Residues 215 to 404 (VDSGMYRWCS…LSIEIPFWHS (190 aa)) enclose the FAD-binding PCMH-type domain.

The protein belongs to the xanthine dehydrogenase family. Aldehyde oxidases (AO) are homodimers and heterodimers of AO subunits. AO-beta is a AAO1-AAO2 heterodimer; AO-gamma is a AAO2 homodimer. AAO2 also forms a dimer with AAO3. Requires [2Fe-2S] cluster as cofactor. FAD is required as a cofactor. It depends on Mo-molybdopterin as a cofactor. As to expression, weakly expressed in roots, leaves and seedlings. In seedlings, mostly expressed in lower part of hypocotyls. Detectable in seeds and mature siliques at low levels.

Its subcellular location is the cytoplasm. The enzyme catalyses indole-3-acetaldehyde + O2 + H2O = (indol-3-yl)acetate + H2O2 + H(+). Its activity is regulated as follows. Strongly inhibited by iodoacetate, potassium cyanide (KCN), 2-mercaptoethanol, dithiothreitol (DTT), p-chloromercuribenzoate, menadione and estradiol. Weakly inhibited by 4'-(9-acridinylamino)methanesulfon-m-anisidine (mAMSA) and tritonX-100. Not affected by allopurinol. In terms of biological role, in higher plant aldehyde oxidases (AO) appear to be homo- and heterodimeric assemblies of AO subunits with probably different physiological functions. In vitro, AO-gamma uses heptaldehyde, benzaldehyde, naphthaldehyde and cinnamaldehyde as substrates; AO-beta uses indole-3-acetaldehyde (IAAld), indole-3-aldehyde (IAld) and naphtaldehyde; the AAO2-AAO3 dimer uses abscisic aldehyde. In Arabidopsis thaliana (Mouse-ear cress), this protein is Indole-3-acetaldehyde oxidase (AAO2).